A 469-amino-acid chain; its full sequence is 3-isopropylmalate dehydratase large subunit (469 aa).

The [4Fe-4S] cluster site is built by C349, C409, and C412.

The protein belongs to the aconitase/IPM isomerase family. LeuC type 1 subfamily. Heterodimer of LeuC and LeuD. The cofactor is [4Fe-4S] cluster.

It carries out the reaction (2R,3S)-3-isopropylmalate = (2S)-2-isopropylmalate. It functions in the pathway amino-acid biosynthesis; L-leucine biosynthesis; L-leucine from 3-methyl-2-oxobutanoate: step 2/4. In terms of biological role, catalyzes the isomerization between 2-isopropylmalate and 3-isopropylmalate, via the formation of 2-isopropylmaleate. The chain is 3-isopropylmalate dehydratase large subunit from Methylorubrum extorquens (strain CM4 / NCIMB 13688) (Methylobacterium extorquens).